A 154-amino-acid chain; its full sequence is Putative ankyrin repeat protein RBE_1220 (154 aa).

ANK repeat units follow at residues 78-108 (EKVN…NVDQ) and 113-142 (NSRT…ILIL).

This Rickettsia bellii (strain RML369-C) protein is Putative ankyrin repeat protein RBE_1220.